The primary structure comprises 335 residues: Glyceraldehyde-3-phosphate dehydrogenase (335 aa).

Residues 13-14 (TI) and Gly-111 contribute to the NAD(+) site. A D-glyceraldehyde 3-phosphate-binding site is contributed by 140–142 (SCN). Cys-141 serves as the catalytic Nucleophile. Arg-169 provides a ligand contact to NAD(+). Residues Thr-171 and 195–196 (HG) contribute to the D-glyceraldehyde 3-phosphate site. Position 300 (Gln-300) interacts with NAD(+).

This sequence belongs to the glyceraldehyde-3-phosphate dehydrogenase family. In terms of assembly, homotetramer.

The protein localises to the cytoplasm. It catalyses the reaction D-glyceraldehyde 3-phosphate + phosphate + NADP(+) = (2R)-3-phospho-glyceroyl phosphate + NADPH + H(+). It carries out the reaction D-glyceraldehyde 3-phosphate + phosphate + NAD(+) = (2R)-3-phospho-glyceroyl phosphate + NADH + H(+). Its pathway is carbohydrate degradation; glycolysis; pyruvate from D-glyceraldehyde 3-phosphate: step 1/5. This is Glyceraldehyde-3-phosphate dehydrogenase from Methanosarcina mazei (strain ATCC BAA-159 / DSM 3647 / Goe1 / Go1 / JCM 11833 / OCM 88) (Methanosarcina frisia).